The primary structure comprises 212 residues: Large ribosomal subunit protein uL4 (212 aa).

Belongs to the universal ribosomal protein uL4 family. As to quaternary structure, part of the 50S ribosomal subunit.

Its function is as follows. One of the primary rRNA binding proteins, this protein initially binds near the 5'-end of the 23S rRNA. It is important during the early stages of 50S assembly. It makes multiple contacts with different domains of the 23S rRNA in the assembled 50S subunit and ribosome. Functionally, forms part of the polypeptide exit tunnel. This is Large ribosomal subunit protein uL4 from Phenylobacterium zucineum (strain HLK1).